Consider the following 597-residue polypeptide: NADH-quinone oxidoreductase subunit C/D (597 aa).

The interval 1-187 is NADH dehydrogenase I subunit C; it reads MIDENKKKNT…ESFFLDEQKE (187 aa). An NADH dehydrogenase I subunit D region spans residues 211-597; sequence DFMFLNLGPN…IDFVMSDVDR (387 aa).

The protein in the N-terminal section; belongs to the complex I 30 kDa subunit family. It in the C-terminal section; belongs to the complex I 49 kDa subunit family. NDH-1 is composed of 13 different subunits. Subunits NuoB, CD, E, F, and G constitute the peripheral sector of the complex.

The protein localises to the cell inner membrane. The catalysed reaction is a quinone + NADH + 5 H(+)(in) = a quinol + NAD(+) + 4 H(+)(out). In terms of biological role, NDH-1 shuttles electrons from NADH, via FMN and iron-sulfur (Fe-S) centers, to quinones in the respiratory chain. The immediate electron acceptor for the enzyme in this species is believed to be ubiquinone. Couples the redox reaction to proton translocation (for every two electrons transferred, four hydrogen ions are translocated across the cytoplasmic membrane), and thus conserves the redox energy in a proton gradient. The polypeptide is NADH-quinone oxidoreductase subunit C/D (Buchnera aphidicola subsp. Schizaphis graminum (strain Sg)).